The primary structure comprises 130 residues: Fluoride-specific ion channel FluC (130 aa).

A run of 4 helical transmembrane segments spans residues 3-23, 39-59, 67-87, and 102-122; these read FVFL…YFVG, GTFS…HLAV, FGIF…SYGL, and VSYA…GWFL. Gly77 and Thr80 together coordinate Na(+).

This sequence belongs to the fluoride channel Fluc/FEX (TC 1.A.43) family.

The protein localises to the cell inner membrane. The catalysed reaction is fluoride(in) = fluoride(out). Na(+) is not transported, but it plays an essential structural role and its presence is essential for fluoride channel function. In terms of biological role, fluoride-specific ion channel. Important for reducing fluoride concentration in the cell, thus reducing its toxicity. The polypeptide is Fluoride-specific ion channel FluC (Helicobacter pylori (strain ATCC 700392 / 26695) (Campylobacter pylori)).